A 301-amino-acid polypeptide reads, in one-letter code: Bifunctional protein FolD (301 aa).

NADP(+)-binding positions include 164–166 (GRS), Ser-191, and Ile-232.

This sequence belongs to the tetrahydrofolate dehydrogenase/cyclohydrolase family. As to quaternary structure, homodimer.

It catalyses the reaction (6R)-5,10-methylene-5,6,7,8-tetrahydrofolate + NADP(+) = (6R)-5,10-methenyltetrahydrofolate + NADPH. The enzyme catalyses (6R)-5,10-methenyltetrahydrofolate + H2O = (6R)-10-formyltetrahydrofolate + H(+). The protein operates within one-carbon metabolism; tetrahydrofolate interconversion. In terms of biological role, catalyzes the oxidation of 5,10-methylenetetrahydrofolate to 5,10-methenyltetrahydrofolate and then the hydrolysis of 5,10-methenyltetrahydrofolate to 10-formyltetrahydrofolate. This Borrelia garinii subsp. bavariensis (strain ATCC BAA-2496 / DSM 23469 / PBi) (Borreliella bavariensis) protein is Bifunctional protein FolD.